We begin with the raw amino-acid sequence, 785 residues long: Potassium transporter 5 (785 aa).

Residues 1 to 60 (MDGEEHQIDGDEVNNHENKLNEKKKSWGKLYRPDSFIIEAGQTPTNTGRRSLMSWRTTMS) lie on the Cytoplasmic side of the membrane. Residue S35 is modified to Phosphoserine. Residues 61-81 (LAFQSLGVVYGDIGTSPLYVY) form a helical membrane-spanning segment. Topologically, residues 82 to 97 (ASTFTDGINDKDDVVG) are extracellular. A helical transmembrane segment spans residues 98-118 (VLSLIIYTITLVALLKYVFIV). Residues 119 to 184 (LQANDNGEGG…EKLENSKFAK (66 aa)) are Cytoplasmic-facing. A helical membrane pass occupies residues 185–205 (IILFLVTIMGTSMVIGDGILT). At 206-218 (PSISVLSAVSGIK) the chain is on the extracellular side. Residues 219–239 (SLGQNTVVGVSVAILIVLFAF) form a helical membrane-spanning segment. The Cytoplasmic segment spans residues 240–247 (QRFGTDKV). A helical transmembrane segment spans residues 248–268 (GFSFAPIILVWFTFLIGIGLF). Residues 269–297 (NLFKHDITVLKALNPLYIIYYFRRTGRQG) lie on the Extracellular side of the membrane. The chain crosses the membrane as a helical span at residues 298 to 318 (WISLGGVFLCITGTEAMFADL). Topologically, residues 319-327 (GHFSVRAVQ) are cytoplasmic. A helical transmembrane segment spans residues 328–348 (ISFSCVAYPALVTIYCGQAAY). At 349–367 (LTKHTYNVSNTFYDSIPDP) the chain is on the extracellular side. N-linked (GlcNAc...) asparagine glycosylation occurs at N355. The chain crosses the membrane as a helical span at residues 368 to 388 (LYWPTFVVAVAASIIASQAMI). The Cytoplasmic segment spans residues 389 to 419 (SGAFSVISQSLRMGCFPRVKVVHTSAKYEGQ). The helical transmembrane segment at 420–440 (VYIPEINYLLMLACIAVTLAF) threads the bilayer. The Extracellular portion of the chain corresponds to 441–451 (RTTEKIGHAYG). A helical membrane pass occupies residues 452 to 472 (IAVVTVMVITTLMVTLIMLVI). At 473 to 476 (WKTN) the chain is on the cytoplasmic side. Residues 477–497 (IVWIAIFLVVFGSIEMLYLSS) form a helical membrane-spanning segment. Residues 498–501 (VMYK) are Extracellular-facing. The chain crosses the membrane as a helical span at residues 502-522 (FTSGGYLPLTITVVLMAMMAI). Residues 523–785 (WQYVHVLKYR…LLKVGMTYEL (263 aa)) lie on the Cytoplasmic side of the membrane. A disordered region spans residues 660–699 (GGEVDETDKEEEPNAETTVVPSSNYVPSSGRIGSAHSSSS). Residues 662-673 (EVDETDKEEEPN) are compositionally biased toward acidic residues. Over residues 674 to 686 (AETTVVPSSNYVP) the composition is skewed to polar residues. The span at 687–697 (SSGRIGSAHSS) shows a compositional bias: low complexity.

Belongs to the HAK/KUP transporter (TC 2.A.72.3) family. In terms of assembly, interacts with ILK1. Phosphorylated at the N-terminus (amino acids 1-95) by CIPK23. In terms of tissue distribution, predominantly expressed in the roots.

Its subcellular location is the cell membrane. In terms of biological role, high-affinity potassium transporter. Can also transport rubidium and cesium. Is essential with AKT1 for high-affinity potassium uptake in roots during seedling establishment and postgermination growth under low potassium conditions. Mediates potassium uptake by plant roots in response to low potassium conditions, by a calcium-, CBL-, and CIPK-dependent pathway. Positively regulated by the calcium sensors calcineurin B-like genes CBL1, CBL8, CBL9 and CBL10, and by phosphorylation by CIPK23. This is Potassium transporter 5 (POT5) from Arabidopsis thaliana (Mouse-ear cress).